Reading from the N-terminus, the 207-residue chain is Guanylate kinase (207 aa).

A Guanylate kinase-like domain is found at 3–181; sequence GLLFVVSAAS…ALHDLESVIT (179 aa). An ATP-binding site is contributed by 10-17; sequence AASGTGKT.

The protein belongs to the guanylate kinase family.

It is found in the cytoplasm. It catalyses the reaction GMP + ATP = GDP + ADP. Functionally, essential for recycling GMP and indirectly, cGMP. This is Guanylate kinase from Acinetobacter baylyi (strain ATCC 33305 / BD413 / ADP1).